The sequence spans 192 residues: MPTSSQDNRILVLGIGNILWADEGFGVRAVEEFHRRYAVPDNVTILDGGTQGLYLVNYLEEADRLIVFDAIDYGLEPGRLKLVRDDEVPRFTGAKKMSLHQTGFQEVISAADLLGRCPKHLVLIGCQPLDLEDWGGPLTPPVRDQIAPSIDLACQVLAEWGVTVSRRSAPLAESERLLANDIDHANYEMRPA.

Glutamate 23, aspartate 69, and histidine 100 together coordinate Ni(2+).

It belongs to the peptidase A31 family.

Functionally, not known. Could be involved in the processing of hydrogenase. The sequence is that of Hydrogenase expression/formation protein HupD (hupD) from Bradyrhizobium diazoefficiens (strain JCM 10833 / BCRC 13528 / IAM 13628 / NBRC 14792 / USDA 110).